A 715-amino-acid chain; its full sequence is MMIENLLIELLTEELPPKSLDKLGNAFAAVIADSLKSQNLTTPDTILTAFASPRRLAVHLTAIPAQAPDQVVALKLMPITVGLDAQGQPTPALHKKLAALGMENVDASALKRVQESKAEMLFLEQNVTGILLAAGLQKAMEDAIRQLPVSKVMTYQLDDGWENVHFVRPVHGLIALHGQKIIPVSAFGLTAGNTTRGHRFEVKQTELIIDHADRYASLLETEGAVIPGFDRRRSWIREGLEAAASAVQLRCISDEVLLDEVTALVEYPNILMGAFPTDFLEVPQECLISTMKINQKYFPLLDTDGKLTNQFLIVANITPADPGQIISGNERVIRSRLADAKFFFDHDRKRTLASRLPDLDKVIYHHQLGSQGERTRYVQTLARIIGRLLGDDNLAGQADQAAMLAKADLLTDMVGEFPELQGIMGRYYARFEGMDETIAFAIEDHYKPRFAGDVLPRSMAGICVALADKLETLISLFSIGQLPTGDKDPYALRRHALGVIRILIEKNLPIGLDVLISRAADVLQDEMIGKQDSGPGHARPVTPQLVGQLQDFFYDRLAASLRDQGYTAQEVEAVLNLRPSLLCEIPRRLAAVRAFAALPEAASLAAANKRVGNILKKSECDATVAIDEACLQASAEITLYRALSEIESDARQAFQNGDYVTALQILAALKAPVDAFFDQVMVNDENEALRRNRLALLMALQATMNRVADISRLAA.

It belongs to the class-II aminoacyl-tRNA synthetase family. As to quaternary structure, tetramer of two alpha and two beta subunits.

The protein localises to the cytoplasm. The catalysed reaction is tRNA(Gly) + glycine + ATP = glycyl-tRNA(Gly) + AMP + diphosphate. In Nitrosomonas europaea (strain ATCC 19718 / CIP 103999 / KCTC 2705 / NBRC 14298), this protein is Glycine--tRNA ligase beta subunit.